The chain runs to 81 residues: Putative defensin-like protein 26 (81 aa).

Positions 1-21 (MASLKVFSFALLIVLTFSVIG) are cleaved as a signal peptide. 2 disulfide bridges follow: C33–C81 and C52–C77.

This sequence belongs to the DEFL family.

The protein resides in the secreted. In Arabidopsis thaliana (Mouse-ear cress), this protein is Putative defensin-like protein 26.